Reading from the N-terminus, the 351-residue chain is Thiamine-phosphate synthase (351 aa).

The interval 1 to 129 is unknown; the sequence is MVEPYSQQKQ…GQACKQMRYR (129 aa). Positions 130–351 are thiamine-phosphate synthase; that stretch reads VYSLETNLMG…SQLNRIKPES (222 aa). Residues 177–181 and N209 contribute to the 4-amino-2-methyl-5-(diphosphooxymethyl)pyrimidine site; that span reads QYRDK. Residues D210 and D229 each contribute to the Mg(2+) site. S248 contacts 4-amino-2-methyl-5-(diphosphooxymethyl)pyrimidine. A 2-[(2R,5Z)-2-carboxy-4-methylthiazol-5(2H)-ylidene]ethyl phosphate-binding site is contributed by 274–276; the sequence is TPT. K277 is a binding site for 4-amino-2-methyl-5-(diphosphooxymethyl)pyrimidine. G304 contributes to the 2-[(2R,5Z)-2-carboxy-4-methylthiazol-5(2H)-ylidene]ethyl phosphate binding site.

This sequence belongs to the thiamine-phosphate synthase family. Mg(2+) is required as a cofactor.

It catalyses the reaction 2-[(2R,5Z)-2-carboxy-4-methylthiazol-5(2H)-ylidene]ethyl phosphate + 4-amino-2-methyl-5-(diphosphooxymethyl)pyrimidine + 2 H(+) = thiamine phosphate + CO2 + diphosphate. The enzyme catalyses 2-(2-carboxy-4-methylthiazol-5-yl)ethyl phosphate + 4-amino-2-methyl-5-(diphosphooxymethyl)pyrimidine + 2 H(+) = thiamine phosphate + CO2 + diphosphate. The catalysed reaction is 4-methyl-5-(2-phosphooxyethyl)-thiazole + 4-amino-2-methyl-5-(diphosphooxymethyl)pyrimidine + H(+) = thiamine phosphate + diphosphate. It participates in cofactor biosynthesis; thiamine diphosphate biosynthesis; thiamine phosphate from 4-amino-2-methyl-5-diphosphomethylpyrimidine and 4-methyl-5-(2-phosphoethyl)-thiazole: step 1/1. Functionally, condenses 4-methyl-5-(beta-hydroxyethyl)thiazole monophosphate (THZ-P) and 2-methyl-4-amino-5-hydroxymethyl pyrimidine pyrophosphate (HMP-PP) to form thiamine monophosphate (TMP). In Nostoc sp. (strain PCC 7120 / SAG 25.82 / UTEX 2576), this protein is Thiamine-phosphate synthase.